Here is a 257-residue protein sequence, read N- to C-terminus: Protein patched homolog 1 (257 aa).

Residues 1–199 (AKLQTGTAYL…LDDILKSFSD (199 aa)) are Extracellular-facing. N-linked (GlcNAc...) asparagine glycosylation is found at N75, N114, and N177. The helical transmembrane segment at 200–220 (ISVIRVASGYLLMLAYACLTM) threads the bilayer. The region spanning 201 to 257 (SVIRVASGYLLMLAYACLTMLRWDCAKSQGAVGLAGVLLVALSVAAGLGLCSLIGIS) is the SSD domain. At 221 to 235 (LRWDCAKSQGAVGLA) the chain is on the cytoplasmic side. The helical transmembrane segment at 236 to 256 (GVLLVALSVAAGLGLCSLIGI) threads the bilayer.

Belongs to the patched family. Glycosylation is necessary for SHH binding. In the eye, detected in neural retina, iris, retinal pigment epithelium, but not in lens.

It localises to the membrane. Functionally, acts as a receptor for sonic hedgehog (SHH), indian hedgehog (IHH) and desert hedgehog (DHH). Associates with the smoothened protein (SMO) to transduce the hedgehog's proteins signal. The sequence is that of Protein patched homolog 1 (PTC1) from Cynops pyrrhogaster (Japanese fire-bellied newt).